Reading from the N-terminus, the 200-residue chain is MIKLTKRQEQVLQLIREHIEETGYPPTRAEISNRLGFRSANAAEEHLKALAKKGAIEMVPGASRGIRLPASETQNQGIPIVGQVAAGYPILAQENIEEYCELPPSFFTPSADYFLRVKGMSMKDVGILDGDLLAVHRTTDIHNGQIVVARIGDEVTVKRFQRQKNKVLLLPENEEFEPIEVNLSQQPLDIEGLGVGVIRR.

Residues 28–48 (RAEISNRLGFRSANAAEEHLK) constitute a DNA-binding region (H-T-H motif). Residues serine 121 and lysine 158 each act as for autocatalytic cleavage activity in the active site.

This sequence belongs to the peptidase S24 family. Homodimer.

The enzyme catalyses Hydrolysis of Ala-|-Gly bond in repressor LexA.. In terms of biological role, represses a number of genes involved in the response to DNA damage (SOS response), including recA and lexA. In the presence of single-stranded DNA, RecA interacts with LexA causing an autocatalytic cleavage which disrupts the DNA-binding part of LexA, leading to derepression of the SOS regulon and eventually DNA repair. This is LexA repressor from Hahella chejuensis (strain KCTC 2396).